Here is a 242-residue protein sequence, read N- to C-terminus: Caffeoyl-CoA O-methyltransferase 3 (242 aa).

Position 16 (Lys16) interacts with substrate. S-adenosyl-L-methionine-binding positions include Thr58, Glu80, 82–83 (GV), Ser88, Asp106, and Ala135. Asp158 serves as a coordination point for substrate. An a divalent metal cation-binding site is contributed by Asp158. Asp160 provides a ligand contact to S-adenosyl-L-methionine. Residues Asp184 and Asn185 each coordinate a divalent metal cation. A substrate-binding site is contributed by Asn189.

The protein belongs to the class I-like SAM-binding methyltransferase superfamily. Cation-dependent O-methyltransferase family. CCoAMT subfamily. It depends on Mg(2+) as a cofactor. In terms of tissue distribution, mostly expressed in the bottom and middle parts of the stems.

It catalyses the reaction (E)-caffeoyl-CoA + S-adenosyl-L-methionine = (E)-feruloyl-CoA + S-adenosyl-L-homocysteine + H(+). Its pathway is aromatic compound metabolism; phenylpropanoid biosynthesis. In terms of biological role, methylates caffeoyl-CoA to feruloyl-CoA and 5-hydroxyferuloyl-CoA to sinapoyl-CoA. Plays a role in the synthesis of feruloylated polysaccharides. Involved in the reinforcement of the plant cell wall. Also involved in the responding to wounding or pathogen challenge by the increased formation of cell wall-bound ferulic acid polymers. Also methylates free caffeic and 5-hydroxyferulic acids. This is Caffeoyl-CoA O-methyltransferase 3 (CCOAOMT3) from Nicotiana tabacum (Common tobacco).